We begin with the raw amino-acid sequence, 488 residues long: Coiled-coil domain-containing protein 77 (488 aa).

Positions 21-48 (GVAVSGPTKRRGMADSLESTPLPSPEDR) are disordered. Serine 36 is subject to Phosphoserine. Lysine 51 is covalently cross-linked (Glycyl lysine isopeptide (Lys-Gly) (interchain with G-Cter in SUMO2)). Coiled coils occupy residues 55–118 (SKEL…QVCL) and 208–488 (KESS…LRLC). The segment at 192–213 (FKADPKISKRRPSRERKESSEH) is disordered.

This chain is Coiled-coil domain-containing protein 77 (CCDC77), found in Homo sapiens (Human).